Here is a 168-residue protein sequence, read N- to C-terminus: Lipoprotein signal peptidase (168 aa).

The next 3 helical transmembrane spans lie at 8 to 28 (LYYL…WLVV), 61 to 81 (GQFW…VIYI), and 91 to 111 (FGIA…DRIF). Residues Asp-117 and Asp-135 contribute to the active site. Residues 128–148 (FPIFNVADAALTIGVALMFIY) form a helical membrane-spanning segment.

It belongs to the peptidase A8 family.

The protein resides in the cell membrane. It catalyses the reaction Release of signal peptides from bacterial membrane prolipoproteins. Hydrolyzes -Xaa-Yaa-Zaa-|-(S,diacylglyceryl)Cys-, in which Xaa is hydrophobic (preferably Leu), and Yaa (Ala or Ser) and Zaa (Gly or Ala) have small, neutral side chains.. The protein operates within protein modification; lipoprotein biosynthesis (signal peptide cleavage). This protein specifically catalyzes the removal of signal peptides from prolipoproteins. The chain is Lipoprotein signal peptidase from Anoxybacillus flavithermus (strain DSM 21510 / WK1).